Here is a 443-residue protein sequence, read N- to C-terminus: EGF-containing fibulin-like extracellular matrix protein 2 (443 aa).

An N-terminal signal peptide occupies residues 1 to 25; sequence MLPFASCLPGSLLLWALLLLLLGAA. Positions 36 to 81 constitute an EGF-like 1; atypical domain; that stretch reads YTECTDGYEWDADSQHCRDVNECLTIPEACKGEMKCINHYGGYLCL. Cystine bridges form between cysteine 58-cysteine 121, cysteine 65-cysteine 80, cysteine 71-cysteine 109, cysteine 127-cysteine 140, cysteine 134-cysteine 149, cysteine 151-cysteine 162, cysteine 168-cysteine 177, cysteine 173-cysteine 186, cysteine 188-cysteine 201, cysteine 207-cysteine 217, cysteine 213-cysteine 226, cysteine 228-cysteine 241, cysteine 247-cysteine 258, cysteine 254-cysteine 267, cysteine 269-cysteine 281, cysteine 287-cysteine 300, cysteine 294-cysteine 309, and cysteine 315-cysteine 327. Positions 123-163 constitute an EGF-like 2; calcium-binding domain; the sequence is DVDECAQALHDCRPSQDCHNLPGSYQCTCPDGYRKVGPECV. Residues 164–202 enclose the EGF-like 3; calcium-binding domain; it reads DIDECRYRYCQHRCVNLPGSFRCQCEPGFQLGPNNRSCV. The N-linked (GlcNAc...) asparagine glycan is linked to asparagine 198. The EGF-like 4; calcium-binding domain occupies 203-242; it reads DVNECDMGAPCEQRCFNSYGTFLCRCNQGYELHRDGFSCS. Residues 243-282 enclose the EGF-like 5; calcium-binding domain; that stretch reads DIDECSYSSYLCQYRCVNEPGRFSCHCPQGYQLLATRLCQ. The EGF-like 6; calcium-binding domain occupies 283 to 328; sequence DIDECETGAHQCSEAQTCVNFHGGYRCVDTNRCVEPYVQVSDNRCF. Asparagine 394 carries an N-linked (GlcNAc...) asparagine glycan.

The protein belongs to the fibulin family. In terms of assembly, homodimer; disulfide-linked. Multimer; allows heparin binding. Monomer. Interacts with FBN1 (via N-terminal domain); this interaction inhibits EFEMP2 binding to LOX and ELN. Interacts with LOX (via propeptide); this interaction is strong and facilitates formation of ternary complexes with ELN during elastic fiber assembly; this interaction limits interaction of EFEMP2 with FBLN5. Interacts with PITX2. Interacts with ELN with moderate affinity; this interaction regulates ELN self-assembly maturation stage. Interacts with FBLN5 with moderate affinity. Interacts with LOXL1 (via propeptide), LTBP1 and TGFB1 stronger than with LOXL2 and LTBP3. Interacts with PCOLCE. Interacts with collagen type IV trimer (COL4A1-COL4A1-COL4A2), NID2 and moderately with COL15A1-derived endostatin. Interacts with EMILIN1; this interaction promotes the incorporation of EFEMP2 into the extracellular matrix. Interacts with LTBP4; the LTBP4 long form (LTBP4L) has a stronger binding affinity than the LTBP4 short form and the LTBP4 long form promotes fibrillar deposition of EFEMP2. N-glycosylated; contains mostly complex-type glycans. Not O-glycosylated. In terms of processing, cleaved by ELANE; produces a 50-55 kDa fragment. Cleaved by MMP2 and MMP9; produces several fragments.

The protein localises to the secreted. It localises to the extracellular space. The protein resides in the extracellular matrix. It is found in the basement membrane. Its function is as follows. Plays a crucial role in elastic fiber formation in tissue, and in the formation of ultrastructural connections between elastic laminae and smooth muscle cells in the aorta, therefore participates in terminal differentiation and maturation of smooth muscle cell (SMC) and in the mechanical properties and wall integrity maintenance of the aorta. In addition, is involved in the control of collagen fibril assembly in tissue throught proteolytic activation of LOX leading to cross- linking of collagen and elastin. Also promotes ELN coacervation and participates in the deposition of ELN coacervates on to microfibrils but also regulates ELN cross- linking through LOX interaction. Moreover adheres to the cells through heparin binding in a calcium-dependent manner and regulates vascularlar smooth muscle cells proliferation through angiotensin signaling. This is EGF-containing fibulin-like extracellular matrix protein 2 from Cricetulus griseus (Chinese hamster).